The chain runs to 288 residues: Bis(5'-nucleosyl)-tetraphosphatase, symmetrical (288 aa).

It belongs to the Ap4A hydrolase family.

It carries out the reaction P(1),P(4)-bis(5'-adenosyl) tetraphosphate + H2O = 2 ADP + 2 H(+). Functionally, hydrolyzes diadenosine 5',5'''-P1,P4-tetraphosphate to yield ADP. In Pseudomonas putida (strain GB-1), this protein is Bis(5'-nucleosyl)-tetraphosphatase, symmetrical.